A 172-amino-acid polypeptide reads, in one-letter code: 3-hydroxydecanoyl-[acyl-carrier-protein] dehydratase (172 aa).

The active site involves His71.

This sequence belongs to the thioester dehydratase family. FabA subfamily. In terms of assembly, homodimer.

The protein resides in the cytoplasm. It catalyses the reaction a (3R)-hydroxyacyl-[ACP] = a (2E)-enoyl-[ACP] + H2O. It carries out the reaction (3R)-hydroxydecanoyl-[ACP] = (2E)-decenoyl-[ACP] + H2O. The enzyme catalyses (2E)-decenoyl-[ACP] = (3Z)-decenoyl-[ACP]. The protein operates within lipid metabolism; fatty acid biosynthesis. Functionally, necessary for the introduction of cis unsaturation into fatty acids. Catalyzes the dehydration of (3R)-3-hydroxydecanoyl-ACP to E-(2)-decenoyl-ACP and then its isomerization to Z-(3)-decenoyl-ACP. Can catalyze the dehydratase reaction for beta-hydroxyacyl-ACPs with saturated chain lengths up to 16:0, being most active on intermediate chain length. In Vibrio cholerae serotype O1 (strain ATCC 39541 / Classical Ogawa 395 / O395), this protein is 3-hydroxydecanoyl-[acyl-carrier-protein] dehydratase.